The chain runs to 366 residues: tRNA 2-selenouridine synthase (366 aa).

The Rhodanese domain maps to Phe-12–His-135. Cys-95 acts as the S-selanylcysteine intermediate in catalysis.

The protein belongs to the SelU family. As to quaternary structure, monomer.

The catalysed reaction is 5-methylaminomethyl-2-thiouridine(34) in tRNA + selenophosphate + (2E)-geranyl diphosphate + H2O + H(+) = 5-methylaminomethyl-2-selenouridine(34) in tRNA + (2E)-thiogeraniol + phosphate + diphosphate. The enzyme catalyses 5-methylaminomethyl-2-thiouridine(34) in tRNA + (2E)-geranyl diphosphate = 5-methylaminomethyl-S-(2E)-geranyl-thiouridine(34) in tRNA + diphosphate. It catalyses the reaction 5-methylaminomethyl-S-(2E)-geranyl-thiouridine(34) in tRNA + selenophosphate + H(+) = 5-methylaminomethyl-2-(Se-phospho)selenouridine(34) in tRNA + (2E)-thiogeraniol. It carries out the reaction 5-methylaminomethyl-2-(Se-phospho)selenouridine(34) in tRNA + H2O = 5-methylaminomethyl-2-selenouridine(34) in tRNA + phosphate. Functionally, involved in the post-transcriptional modification of the uridine at the wobble position (U34) of tRNA(Lys), tRNA(Glu) and tRNA(Gln). Catalyzes the conversion of 2-thiouridine (S2U-RNA) to 2-selenouridine (Se2U-RNA). Acts in a two-step process involving geranylation of 2-thiouridine (S2U) to S-geranyl-2-thiouridine (geS2U) and subsequent selenation of the latter derivative to 2-selenouridine (Se2U) in the tRNA chain. The sequence is that of tRNA 2-selenouridine synthase from Pseudomonas syringae pv. syringae (strain B728a).